Consider the following 576-residue polypeptide: Arginine--tRNA ligase (576 aa).

The 'HIGH' region motif lies at 122–132 (PNVAKQMHVGH).

The protein belongs to the class-I aminoacyl-tRNA synthetase family. Monomer.

The protein localises to the cytoplasm. It catalyses the reaction tRNA(Arg) + L-arginine + ATP = L-arginyl-tRNA(Arg) + AMP + diphosphate. This Yersinia pseudotuberculosis serotype O:3 (strain YPIII) protein is Arginine--tRNA ligase.